The sequence spans 235 residues: Probable carboxylesterase Os04g0669600 (235 aa).

Active-site charge relay system residues include serine 113, aspartate 167, and histidine 199.

This sequence belongs to the AB hydrolase superfamily. AB hydrolase 2 family.

In terms of biological role, possesses carboxylesterase activity in vitro. In Oryza sativa subsp. japonica (Rice), this protein is Probable carboxylesterase Os04g0669600.